A 317-amino-acid chain; its full sequence is METWQEVTVHVHRDAQEAVSYVLIETGSQGVAIADSADYIGQKDRFGELYPDVEQSDMIAITAYYPSSTNLADVIATINEQLAELASFGLQVGQVTVDSQELAEEDWADNWKKYYEPARITHDLTIVPSWTAYDASAGEKVIKLDPGMAFGTGTHPTTKMSLFALEQILRGGETVIDVGTGSGVLSIASSLLGAKTIYAYDLDDVAVRVAQENIDLNQGTDNIHVAAGDLLKGVSQEADVIVANILADILVLLTDDAYRLVKKEGYLILSGIISEKLDMVLEAAFSAGFFLETHMVQGEWNALVFKKTDDISGVIGG.

T158, G179, D201, and N244 together coordinate S-adenosyl-L-methionine.

The protein belongs to the methyltransferase superfamily. PrmA family.

Its subcellular location is the cytoplasm. The enzyme catalyses L-lysyl-[protein] + 3 S-adenosyl-L-methionine = N(6),N(6),N(6)-trimethyl-L-lysyl-[protein] + 3 S-adenosyl-L-homocysteine + 3 H(+). In terms of biological role, methylates ribosomal protein L11. In Streptococcus pyogenes serotype M6 (strain ATCC BAA-946 / MGAS10394), this protein is Ribosomal protein L11 methyltransferase.